We begin with the raw amino-acid sequence, 248 residues long: ATP synthase subunit a (248 aa).

Helical transmembrane passes span 29–49 (AMLT…CLFS), 85–105 (VFPF…QGLV), 115–135 (LIQT…IVLA), 143–163 (LFLP…IEIV), 176–196 (LFAN…VAWA), 201–221 (GGLL…LFGL), and 227–247 (LIQA…AIVL).

The protein belongs to the ATPase A chain family. F-type ATPases have 2 components, CF(1) - the catalytic core - and CF(0) - the membrane proton channel. CF(1) has five subunits: alpha(3), beta(3), gamma(1), delta(1), epsilon(1). CF(0) has three main subunits: a, b and c.

It is found in the mitochondrion inner membrane. Functionally, mitochondrial membrane ATP synthase (F(1)F(0) ATP synthase or Complex V) produces ATP from ADP in the presence of a proton gradient across the membrane which is generated by electron transport complexes of the respiratory chain. F-type ATPases consist of two structural domains, F(1) - containing the extramembraneous catalytic core and F(0) - containing the membrane proton channel, linked together by a central stalk and a peripheral stalk. During catalysis, ATP synthesis in the catalytic domain of F(1) is coupled via a rotary mechanism of the central stalk subunits to proton translocation. Key component of the proton channel; it may play a direct role in the translocation of protons across the membrane. This chain is ATP synthase subunit a (ATP6), found in Pylaiella littoralis (Seaweed).